The primary structure comprises 107 residues: Ferredoxin-1 (107 aa).

4Fe-4S ferredoxin-type domains lie at 2-30 and 31-60; these read AFVV…YEGP and NFLV…SEDE. [3Fe-4S] cluster contacts are provided by C9 and C17. Positions 21, 40, 43, and 46 each coordinate [4Fe-4S] cluster. C50 serves as a coordination point for [3Fe-4S] cluster. The interval 84-107 is disordered; that stretch reads EKKDPLPDAEDWDGVKGKLQHLER. The segment covering 96–107 has biased composition (basic and acidic residues); it reads DGVKGKLQHLER.

[4Fe-4S] cluster serves as cofactor. It depends on [3Fe-4S] cluster as a cofactor.

Functionally, ferredoxins are iron-sulfur proteins that transfer electrons in a wide variety of metabolic reactions. This ferredoxin could play a role in regulating gene expression by interacting directly with DNA. The sequence is that of Ferredoxin-1 (fdxA) from Azotobacter vinelandii.